A 290-amino-acid polypeptide reads, in one-letter code: MATRLQDGNSISPEPMLSDGSAAKRPTILVFDSGVGGLSIYNEVRQTLPNAHYLYVFDNEAFPYGEKPEQFIVDRVVAIVGAMWRQHKIDLVIVACNTASTISLPALRERFPCPIIGVVPAIKPAARLTRNGIVGLLATRATVQRSYTHDLISQYAGDCQILQLGTAELVDMAEARLHGELVPLPVLRKLLRPWLRAAEPPDTVVLGCTHFPLLSQELQAVLPEGTRLVDSGSAIARRAAWLVEHDMDVSSLQGETGPNKTYCLVTTPQAVALMPALTRYGFGSSGMLTL.

Residues 32–33 (DS) and 64–65 (YG) contribute to the substrate site. The active-site Proton donor/acceptor is the C96. 97 to 98 (NT) contacts substrate. C208 acts as the Proton donor/acceptor in catalysis. Residue 209–210 (TH) coordinates substrate.

It belongs to the aspartate/glutamate racemases family.

It carries out the reaction L-glutamate = D-glutamate. The protein operates within cell wall biogenesis; peptidoglycan biosynthesis. Its function is as follows. Provides the (R)-glutamate required for cell wall biosynthesis. The sequence is that of Glutamate racemase from Sodalis glossinidius (strain morsitans).